The chain runs to 860 residues: MKRLKKIDLNQKYDHKTVSEGVVDFWLTTDYANQDSDFCDPNAKPFSIIMPPPNLTGILHIGHAWNLSIQDLIVRYQKLVMGKINWIPGTDHAGIATQTKFESIQRTKEINYKKDDRTTHFNNIYQWSQESSQTIKNQAKSLGLALNWKKEKFTLSQESNKYVLDVFVKLYQQGYIVKKYTLVNWDTKLNTAISNIEVINKETTQKLHYIKYYLKDSNDYLVIATTRPETIYADVAVFVNPNDQRYLKYHNQMVINPLNNKLIPILVDEYIDMEFGSAVMKCTPGHDHNDYALSKKYQLEELSCINFDGTLNELALEFSGLDLYEARELIVKKLISEDKYVKFEEITSNVGYSDRSNVIVQPLLSKQWFLITTKFVDEIKKLVNNEDQIKIYPKRFLDTINNWLDHNQDWCISRQLVWGHQIPAWYHKDHPDEVIVSINSPGDDYYRDSDVLDTWFSSALWPLICFDDGLDQKEFNANFPNSLLVTAYDIVFFWVLRMIFMSWLLKKSIPFHDLLLHGLILDEHNRKMSKSLNNGVDPIQIIDQYGADALRLFLTSNTSPGEDVSYNVEKINAAASFLNKLWNLARYLKLIDQSKLTDQPLDSLDHWIIHRFNEVNAGIQDKLKEYRFALSNKQLSDFIWDDFANVYIELNKKAQWSKAKFELANDIFRKFLIMLHPSVPFITEQIYNTFEFSDSKPSIILEKWPGLIKIENALDHFDQIFNLIIKIRNFKQSFDLKNKDTLDLLYKNEVSYIKDLTKYLKTENVNLIKISDQKLNDLFLIATEDNEFYVVYTQDKTKIVDKLVVEIAKLEKEVERSSNIVNNKNFKKKAPKEKYEAELKKLSNYQEELKLKQDKLNSLK.

The 'HIGH' region signature appears at 53 to 63 (PNLTGILHIGH). The 'KMSKS' region signature appears at 527-531 (KMSKS). Lys530 is a binding site for ATP. Positions 794 to 860 (QDKTKIVDKL…LKQDKLNSLK (67 aa)) form a coiled coil.

It belongs to the class-I aminoacyl-tRNA synthetase family. ValS type 1 subfamily. In terms of assembly, monomer.

The protein localises to the cytoplasm. The enzyme catalyses tRNA(Val) + L-valine + ATP = L-valyl-tRNA(Val) + AMP + diphosphate. In terms of biological role, catalyzes the attachment of valine to tRNA(Val). As ValRS can inadvertently accommodate and process structurally similar amino acids such as threonine, to avoid such errors, it has a 'posttransfer' editing activity that hydrolyzes mischarged Thr-tRNA(Val) in a tRNA-dependent manner. The protein is Valine--tRNA ligase of Mycoplasmoides gallisepticum (strain R(low / passage 15 / clone 2)) (Mycoplasma gallisepticum).